We begin with the raw amino-acid sequence, 176 residues long: Large ribosomal subunit protein uL16 (176 aa).

It belongs to the universal ribosomal protein uL16 family.

The chain is Large ribosomal subunit protein uL16 from Halorubrum lacusprofundi (strain ATCC 49239 / DSM 5036 / JCM 8891 / ACAM 34).